The primary structure comprises 165 residues: Ribosome maturation factor RimM (165 aa).

Residues 94–163 (EDEFYIADLN…KDYVTLNYQR (70 aa)) enclose the PRC barrel domain.

This sequence belongs to the RimM family. Binds ribosomal protein uS19.

The protein resides in the cytoplasm. An accessory protein needed during the final step in the assembly of 30S ribosomal subunit, possibly for assembly of the head region. Essential for efficient processing of 16S rRNA. May be needed both before and after RbfA during the maturation of 16S rRNA. It has affinity for free ribosomal 30S subunits but not for 70S ribosomes. This chain is Ribosome maturation factor RimM, found in Rickettsia akari (strain Hartford).